The following is a 243-amino-acid chain: 7-carboxy-7-deazaguanine synthase (243 aa).

Substrate-binding positions include 15-17 (IQG) and Arg-30. Residues 21–239 (VIGQKTMFVR…PQLHTLLWGN (219 aa)) enclose the Radical SAM core domain. Residues Cys-34, Cys-38, and Cys-41 each contribute to the [4Fe-4S] cluster site. Ser-43 contributes to the Mg(2+) binding site. Position 81 (Ser-81) interacts with substrate. S-adenosyl-L-methionine contacts are provided by residues Gly-83 and 127–129 (SPK).

The protein belongs to the radical SAM superfamily. 7-carboxy-7-deazaguanine synthase family. In terms of assembly, homodimer. [4Fe-4S] cluster is required as a cofactor. Requires S-adenosyl-L-methionine as cofactor. Mg(2+) serves as cofactor.

It carries out the reaction 6-carboxy-5,6,7,8-tetrahydropterin + H(+) = 7-carboxy-7-deazaguanine + NH4(+). It participates in purine metabolism; 7-cyano-7-deazaguanine biosynthesis. Catalyzes the complex heterocyclic radical-mediated conversion of 6-carboxy-5,6,7,8-tetrahydropterin (CPH4) to 7-carboxy-7-deazaguanine (CDG), a step common to the biosynthetic pathways of all 7-deazapurine-containing compounds. In Bacillus subtilis (strain 168), this protein is 7-carboxy-7-deazaguanine synthase.